The following is a 201-amino-acid chain: dTTP/UTP pyrophosphatase (201 aa).

D79 serves as the catalytic Proton acceptor.

It belongs to the Maf family. YhdE subfamily. Requires a divalent metal cation as cofactor.

It is found in the cytoplasm. It catalyses the reaction dTTP + H2O = dTMP + diphosphate + H(+). The enzyme catalyses UTP + H2O = UMP + diphosphate + H(+). In terms of biological role, nucleoside triphosphate pyrophosphatase that hydrolyzes dTTP and UTP. May have a dual role in cell division arrest and in preventing the incorporation of modified nucleotides into cellular nucleic acids. The sequence is that of dTTP/UTP pyrophosphatase from Hahella chejuensis (strain KCTC 2396).